We begin with the raw amino-acid sequence, 1086 residues long: Lysine-specific demethylase 4B (1086 aa).

The JmjN domain maps to 15–57; the sequence is IMTFRPTMDEFRDFNRYVAYIESQGAHRAGLAKIIPPKEWKPR. Residue Y133 participates in 2-oxoglutarate binding. The JmjC domain maps to 146–309; sequence VAQWNIGNLR…YGKVATQCTC (164 aa). 2 residues coordinate Fe cation: H189 and E191. 2 residues coordinate 2-oxoglutarate: N199 and K207. Residues C235 and H241 each coordinate Zn(2+). K242 is a binding site for 2-oxoglutarate. Residue H277 coordinates Fe cation. Residues C307 and C309 each contribute to the Zn(2+) site. The span at 379-395 shows a compositional bias: basic and acidic residues; that stretch reads SRPWRKAEEERRREPTR. 2 disordered regions span residues 379–536 and 575–624; these read SRPW…PPGA and PMEL…LSVV. A compositionally biased stretch (basic residues) spans 401–410; that stretch reads SHRRRSQPKK. Acidic residues predominate over residues 441 to 450; the sequence is MPEDEEEEEL. The span at 456 to 467 shows a compositional bias: basic and acidic residues; sequence HEAEGVEEDGRG. Over residues 468-480 the composition is skewed to basic residues; the sequence is KPRPTKARNKKKT. Positions 512-522 are enriched in low complexity; sequence GPAMGPMAAEG. Residues 585–597 show a composition bias toward polar residues; the sequence is QAQAGDSQGTTPF. K599 bears the N6-acetyllysine mark. A PHD-type 1 zinc finger spans residues 719-777; the sequence is MCFTSSGENTEPLPANSYVGEDGTSPLISCAHCCLQVHASCYGVRPELAKEGWTCSRCA. A C2HC pre-PHD-type zinc finger spans residues 782–815; the sequence is TAECCLCNLRGGALQRTTEHRWIHVICAIAVPEV. A PHD-type 2 zinc finger spans residues 838–895; that stretch reads LKCIYCRKRMKRVSGACIQCSYEHCSTSFHVTCAHAAGVLMEPDDWPYVVSITCLKHR. 2 Tudor domains span residues 905–962 and 963–1019; these read RTVS…CLRL and GPPP…EELP. Residues 1024-1043 are disordered; it reads SRLSLSTGTPQEPSFSGDDV. Over residues 1026–1037 the composition is skewed to polar residues; that stretch reads LSLSTGTPQEPS.

The protein belongs to the JHDM3 histone demethylase family. Fe(2+) serves as cofactor.

Its subcellular location is the nucleus. The catalysed reaction is N(6),N(6),N(6)-trimethyl-L-lysyl(9)-[histone H3] + 2 2-oxoglutarate + 2 O2 = N(6)-methyl-L-lysyl(9)-[histone H3] + 2 formaldehyde + 2 succinate + 2 CO2. In terms of biological role, histone demethylase that specifically demethylates 'Lys-9' of histone H3, thereby playing a role in histone code. Does not demethylate histone H3 'Lys-4', H3 'Lys-27', H3 'Lys-36' nor H4 'Lys-20'. Only able to demethylate trimethylated H3 'Lys-9', with a weaker activity than KDM4A, KDM4C and KDM4D. Demethylation of Lys residue generates formaldehyde and succinate. Plays a critical role in the development of the central nervous system (CNS). The protein is Lysine-specific demethylase 4B (Kdm4b) of Mus musculus (Mouse).